Consider the following 21-residue polypeptide: Bombinin-H1/H3 (21 aa).

Ile-2 carries the D-allo-isoleucine; in form H3 modification. Position 20 is an isoleucine amide (Ile-20).

Belongs to the bombinin family. Expressed by the skin glands.

The protein localises to the secreted. In terms of biological role, has antimicrobial and hemolytic activities. In Bombina variegata (Yellow-bellied toad), this protein is Bombinin-H1/H3.